Here is a 521-residue protein sequence, read N- to C-terminus: Bifunctional purine biosynthesis protein PurH (521 aa).

The MGS-like domain occupies 1 to 145 (MIKQALISVS…KNHRDVTVVV (145 aa)).

The protein belongs to the PurH family.

The catalysed reaction is (6R)-10-formyltetrahydrofolate + 5-amino-1-(5-phospho-beta-D-ribosyl)imidazole-4-carboxamide = 5-formamido-1-(5-phospho-D-ribosyl)imidazole-4-carboxamide + (6S)-5,6,7,8-tetrahydrofolate. It catalyses the reaction IMP + H2O = 5-formamido-1-(5-phospho-D-ribosyl)imidazole-4-carboxamide. The protein operates within purine metabolism; IMP biosynthesis via de novo pathway; 5-formamido-1-(5-phospho-D-ribosyl)imidazole-4-carboxamide from 5-amino-1-(5-phospho-D-ribosyl)imidazole-4-carboxamide (10-formyl THF route): step 1/1. It participates in purine metabolism; IMP biosynthesis via de novo pathway; IMP from 5-formamido-1-(5-phospho-D-ribosyl)imidazole-4-carboxamide: step 1/1. The chain is Bifunctional purine biosynthesis protein PurH from Burkholderia ambifaria (strain ATCC BAA-244 / DSM 16087 / CCUG 44356 / LMG 19182 / AMMD) (Burkholderia cepacia (strain AMMD)).